The primary structure comprises 268 residues: Methionine aminopeptidase (268 aa).

H79 is a substrate binding site. D97, D108, and H172 together coordinate a divalent metal cation. H179 contacts substrate. Residues E205 and E236 each contribute to the a divalent metal cation site.

This sequence belongs to the peptidase M24A family. Methionine aminopeptidase type 1 subfamily. As to quaternary structure, monomer. Co(2+) serves as cofactor. Zn(2+) is required as a cofactor. Requires Mn(2+) as cofactor. It depends on Fe(2+) as a cofactor.

The enzyme catalyses Release of N-terminal amino acids, preferentially methionine, from peptides and arylamides.. Functionally, removes the N-terminal methionine from nascent proteins. The N-terminal methionine is often cleaved when the second residue in the primary sequence is small and uncharged (Met-Ala-, Cys, Gly, Pro, Ser, Thr, or Val). Requires deformylation of the N(alpha)-formylated initiator methionine before it can be hydrolyzed. The polypeptide is Methionine aminopeptidase (Haemophilus influenzae (strain ATCC 51907 / DSM 11121 / KW20 / Rd)).